Here is a 240-residue protein sequence, read N- to C-terminus: Large ribosomal subunit protein uL1 (240 aa).

This sequence belongs to the universal ribosomal protein uL1 family. In terms of assembly, part of the 50S ribosomal subunit.

Functionally, binds directly to 23S rRNA. The L1 stalk is quite mobile in the ribosome, and is involved in E site tRNA release. Protein L1 is also a translational repressor protein, it controls the translation of the L11 operon by binding to its mRNA. This Nocardioides sp. (strain ATCC BAA-499 / JS614) protein is Large ribosomal subunit protein uL1.